Consider the following 310-residue polypeptide: Melanocyte-stimulating hormone receptor (310 aa).

The Extracellular segment spans residues Met1 to Glu37. N-linked (GlcNAc...) asparagine glycosylation is present at Asn29. A helical membrane pass occupies residues Leu38 to Ile63. Topologically, residues Ala64–Ser72 are cytoplasmic. The helical transmembrane segment at Met73 to Leu93 threads the bilayer. At Glu94 to Asn110 the chain is on the extracellular side. A helical membrane pass occupies residues Thr111–Val132. Over Asp133–Arg155 the chain is Cytoplasmic. The helical transmembrane segment at Ala156–Tyr175 threads the bilayer. At Asp176–Cys183 the chain is on the extracellular side. The chain crosses the membrane as a helical span at residues Leu184–Leu203. Residues Ala204 to Ala232 lie on the Cytoplasmic side of the membrane. A helical transmembrane segment spans residues Ala233–Phe258. Topologically, residues Cys259–Asn271 are extracellular. A helical membrane pass occupies residues Phe272 to Phe292. The Cytoplasmic portion of the chain corresponds to Arg293–Trp310.

Belongs to the G-protein coupled receptor 1 family. In terms of assembly, interacts with MGRN1, but does not undergo MGRN1-mediated ubiquitination; this interaction competes with GNAS-binding and thus inhibits agonist-induced cAMP production. Interacts with OPN3; the interaction results in a decrease in MC1R-mediated cAMP signaling and ultimately a decrease in melanin production in melanocytes.

The protein resides in the cell membrane. Its function is as follows. Receptor for MSH (alpha, beta and gamma) and ACTH. The activity of this receptor is mediated by G proteins which activate adenylate cyclase. Mediates melanogenesis, the production of eumelanin (black/brown) and phaeomelanin (red/yellow), via regulation of cAMP signaling in melanocytes. This is Melanocyte-stimulating hormone receptor (MC1R) from Leontopithecus chrysomelas (Golden-headed lion tamarin).